We begin with the raw amino-acid sequence, 235 residues long: uncharacterized protein (235 aa).

2 disordered regions span residues 20 to 64 (IHPN…LPIK) and 140 to 164 (SQFF…NFDQ). Low complexity-rich tracts occupy residues 30–60 (NNNN…SNNN) and 140–161 (SQFF…NNKN). The stretch at 174-213 (KYMEFLSDIEQLNSDLKESKDNLESISIEMVLLETRLKGL) forms a coiled coil.

This is an uncharacterized protein from Dictyostelium discoideum (Social amoeba).